The following is a 49-amino-acid chain: Large ribosomal subunit protein bL33A (49 aa).

Belongs to the bacterial ribosomal protein bL33 family.

This chain is Large ribosomal subunit protein bL33A, found in Staphylococcus saprophyticus subsp. saprophyticus (strain ATCC 15305 / DSM 20229 / NCIMB 8711 / NCTC 7292 / S-41).